The sequence spans 66 residues: Large ribosomal subunit protein bL35 (66 aa).

Residues Met-1–Arg-16 are compositionally biased toward basic residues. The tract at residues Met-1 to Gly-20 is disordered.

This sequence belongs to the bacterial ribosomal protein bL35 family.

The protein is Large ribosomal subunit protein bL35 of Streptococcus uberis (strain ATCC BAA-854 / 0140J).